Here is a 208-residue protein sequence, read N- to C-terminus: uncharacterized protein (208 aa).

Positions 118 to 134 are enriched in low complexity; sequence QYPNQYQQQPQQQQPGY. Residues 118–208 form a disordered region; the sequence is QYPNQYQQQP…HKKEKNEIKE (91 aa). The segment covering 138–175 has biased composition (polar residues); the sequence is NYNQPPVQLNKQAYDNYQQNDYKSNNQPNLAKENNISN. Residues 187 to 201 are compositionally biased toward basic residues; sequence KKEKKHSFFSKLHKK.

This is an uncharacterized protein from Dictyostelium discoideum (Social amoeba).